The following is a 190-amino-acid chain: dCTP deaminase (190 aa).

113–118 is a dCTP binding site; it reads KSTYAR. Glutamate 139 serves as the catalytic Proton donor/acceptor. Residues glutamine 158, tyrosine 172, lysine 181, and glutamine 182 each coordinate dCTP.

The protein belongs to the dCTP deaminase family. Homotrimer.

The enzyme catalyses dCTP + H2O + H(+) = dUTP + NH4(+). The protein operates within pyrimidine metabolism; dUMP biosynthesis; dUMP from dCTP (dUTP route): step 1/2. Catalyzes the deamination of dCTP to dUTP. This Chlamydia felis (strain Fe/C-56) (Chlamydophila felis) protein is dCTP deaminase.